The primary structure comprises 858 residues: DNA mismatch repair protein MutS (858 aa).

Residue 603 to 610 participates in ATP binding; that stretch reads GPNMSGKS.

The protein belongs to the DNA mismatch repair MutS family.

Its function is as follows. This protein is involved in the repair of mismatches in DNA. It is possible that it carries out the mismatch recognition step. This protein has a weak ATPase activity. The polypeptide is DNA mismatch repair protein MutS (Streptococcus agalactiae serotype Ia (strain ATCC 27591 / A909 / CDC SS700)).